We begin with the raw amino-acid sequence, 164 residues long: Crossover junction endodeoxyribonuclease RuvC (164 aa).

Catalysis depends on residues Asp7, Glu67, and Asp140. 3 residues coordinate Mg(2+): Asp7, Glu67, and Asp140.

Belongs to the RuvC family. In terms of assembly, homodimer which binds Holliday junction (HJ) DNA. The HJ becomes 2-fold symmetrical on binding to RuvC with unstacked arms; it has a different conformation from HJ DNA in complex with RuvA. In the full resolvosome a probable DNA-RuvA(4)-RuvB(12)-RuvC(2) complex forms which resolves the HJ. Mg(2+) serves as cofactor.

The protein resides in the cytoplasm. It catalyses the reaction Endonucleolytic cleavage at a junction such as a reciprocal single-stranded crossover between two homologous DNA duplexes (Holliday junction).. Its function is as follows. The RuvA-RuvB-RuvC complex processes Holliday junction (HJ) DNA during genetic recombination and DNA repair. Endonuclease that resolves HJ intermediates. Cleaves cruciform DNA by making single-stranded nicks across the HJ at symmetrical positions within the homologous arms, yielding a 5'-phosphate and a 3'-hydroxyl group; requires a central core of homology in the junction. The consensus cleavage sequence is 5'-(A/T)TT(C/G)-3'. Cleavage occurs on the 3'-side of the TT dinucleotide at the point of strand exchange. HJ branch migration catalyzed by RuvA-RuvB allows RuvC to scan DNA until it finds its consensus sequence, where it cleaves and resolves the cruciform DNA. This Finegoldia magna (strain ATCC 29328 / DSM 20472 / WAL 2508) (Peptostreptococcus magnus) protein is Crossover junction endodeoxyribonuclease RuvC.